A 585-amino-acid chain; its full sequence is Protein DENND6B (585 aa).

The span at 1 to 10 (MEVPVGPGPR) shows a compositional bias: low complexity. A disordered region spans residues 1–25 (MEVPVGPGPRQAGGGLGATRSSSSG). The 179-residue stretch at 43–221 (ECVCVVTFDL…IQVRIPSRVD (179 aa)) folds into the uDENN domain. One can recognise a cDENN domain in the interval 246 to 373 (VHELDLFRCF…VKLKKPSRLK (128 aa)). Residues 375–499 (LDTKPGLYTS…KSPHFDGWYR (125 aa)) form the dDENN domain.

This sequence belongs to the DENND6 family.

It localises to the recycling endosome. The protein localises to the cytoplasm. Guanine nucleotide exchange factor (GEF) for RAB14. Also has some, lesser GEF activity towards RAB35. The polypeptide is Protein DENND6B (Dennd6b) (Mus musculus (Mouse)).